Consider the following 256-residue polypeptide: Type III pantothenate kinase (256 aa).

D6–V13 contributes to the ATP binding site. Substrate contacts are provided by residues Y100 and G107–R110. Residue D109 is the Proton acceptor of the active site. D129 lines the K(+) pocket. Residue T132 coordinates ATP. T184 contributes to the substrate binding site.

This sequence belongs to the type III pantothenate kinase family. As to quaternary structure, homodimer. Requires NH4(+) as cofactor. It depends on K(+) as a cofactor.

Its subcellular location is the cytoplasm. The catalysed reaction is (R)-pantothenate + ATP = (R)-4'-phosphopantothenate + ADP + H(+). The protein operates within cofactor biosynthesis; coenzyme A biosynthesis; CoA from (R)-pantothenate: step 1/5. Its function is as follows. Catalyzes the phosphorylation of pantothenate (Pan), the first step in CoA biosynthesis. The protein is Type III pantothenate kinase of Clostridioides difficile (strain 630) (Peptoclostridium difficile).